The chain runs to 835 residues: Cap-specific mRNA (nucleoside-2'-O-)-methyltransferase 1 (835 aa).

A Bipartite nuclear localization signal motif is present at residues R2–R19. A disordered region spans residues A24–D68. Phosphoserine occurs at positions 28, 31, 53, 66, and 91. A compositionally biased stretch (polar residues) spans S37–D54. The span at T57–D68 shows a compositional bias: basic and acidic residues. A G-patch domain is found at Y87–Q133. The residue at position 108 (K108) is an N6-acetyllysine. Substrate is bound by residues K203 to D207 and R218. The region spanning F231 to K450 is the RrmJ-type SAM-dependent 2'-O-MTase domain. Residue N234 coordinates S-adenosyl-L-methionine. The active site involves K239. S-adenosyl-L-methionine is bound by residues C277–F283 and D335–I336. The active site involves D364. N374 to Q376 contacts substrate. The active-site Proton acceptor is the K404. Residue N439 participates in substrate binding. The segment at S727–A835 is interaction with POLR2A. Residues R752 to D786 enclose the WW domain.

As to quaternary structure, interacts with POLR2A (via C-terminus).

Its subcellular location is the nucleus. The enzyme catalyses a 5'-end (N(7)-methyl 5'-triphosphoguanosine)-ribonucleoside in mRNA + S-adenosyl-L-methionine = a 5'-end (N(7)-methyl 5'-triphosphoguanosine)-(2'-O-methyl-ribonucleoside) in mRNA + S-adenosyl-L-homocysteine + H(+). Functionally, S-adenosyl-L-methionine-dependent methyltransferase that mediates mRNA cap1 2'-O-ribose methylation to the 5'-cap structure of mRNAs. Methylates the ribose of the first nucleotide of a m(7)GpppG-capped mRNA and small nuclear RNA (snRNA) to produce m(7)GpppRm (cap1). Displays a preference for cap0 transcripts. Cap1 modification is linked to higher levels of translation. May be involved in the interferon response pathway. This chain is Cap-specific mRNA (nucleoside-2'-O-)-methyltransferase 1 (CMTR1), found in Ailuropoda melanoleuca (Giant panda).